We begin with the raw amino-acid sequence, 282 residues long: Putative phosphoenolpyruvate synthase regulatory protein (282 aa).

Gly161 to Thr168 provides a ligand contact to ADP.

It belongs to the pyruvate, phosphate/water dikinase regulatory protein family. PSRP subfamily.

It catalyses the reaction [pyruvate, water dikinase] + ADP = [pyruvate, water dikinase]-phosphate + AMP + H(+). The enzyme catalyses [pyruvate, water dikinase]-phosphate + phosphate + H(+) = [pyruvate, water dikinase] + diphosphate. Its function is as follows. Bifunctional serine/threonine kinase and phosphorylase involved in the regulation of the phosphoenolpyruvate synthase (PEPS) by catalyzing its phosphorylation/dephosphorylation. The polypeptide is Putative phosphoenolpyruvate synthase regulatory protein (Janthinobacterium sp. (strain Marseille) (Minibacterium massiliensis)).